The following is a 445-amino-acid chain: Proline--tRNA ligase (445 aa).

Belongs to the class-II aminoacyl-tRNA synthetase family. ProS type 2 subfamily. As to quaternary structure, homodimer.

It localises to the cytoplasm. It carries out the reaction tRNA(Pro) + L-proline + ATP = L-prolyl-tRNA(Pro) + AMP + diphosphate. In terms of biological role, catalyzes the attachment of proline to tRNA(Pro) in a two-step reaction: proline is first activated by ATP to form Pro-AMP and then transferred to the acceptor end of tRNA(Pro). This Cereibacter sphaeroides (strain ATCC 17023 / DSM 158 / JCM 6121 / CCUG 31486 / LMG 2827 / NBRC 12203 / NCIMB 8253 / ATH 2.4.1.) (Rhodobacter sphaeroides) protein is Proline--tRNA ligase.